The chain runs to 311 residues: Purine nucleoside phosphorylase (311 aa).

S2 is modified (N-acetylserine). Residues S46, H81, 101 to 103 (RLH), and A134 each bind phosphate. E219 is a binding site for a purine D-ribonucleoside. Residue S238 participates in phosphate binding. A purine D-ribonucleoside is bound at residue N261. S275 bears the Phosphoserine mark.

This sequence belongs to the PNP/MTAP phosphorylase family.

It carries out the reaction a purine D-ribonucleoside + phosphate = a purine nucleobase + alpha-D-ribose 1-phosphate. It functions in the pathway purine metabolism; purine nucleoside salvage. Its function is as follows. The purine nucleoside phosphorylases catalyze the phosphorolytic breakdown of the N-glycosidic bond in the beta-(deoxy)ribonucleoside molecules, with the formation of the corresponding free purine bases and pentose-1-phosphate. Cleaves guanosine and inosine. The sequence is that of Purine nucleoside phosphorylase (PNP1) from Saccharomyces cerevisiae (strain ATCC 204508 / S288c) (Baker's yeast).